Here is a 114-residue protein sequence, read N- to C-terminus: Probable gas vesicle protein J2 (114 aa).

Over residues Met1–Gly10 the composition is skewed to basic and acidic residues. A disordered region spans residues Met1 to Gly21.

This sequence belongs to the gas vesicle GvpA family. Interacts with GvpA.

The protein resides in the gas vesicle. Its function is as follows. A minor component of the gas vesicle, might be involved in nucleating gas vesicle formation. Gas vesicles (GV) are hollow, gas filled proteinaceous nanostructures. It is not clear what function GVs perform in soil bacteria. The protein is Probable gas vesicle protein J2 of Streptomyces coelicolor (strain ATCC BAA-471 / A3(2) / M145).